The primary structure comprises 425 residues: Histidine--tRNA ligase (425 aa).

Belongs to the class-II aminoacyl-tRNA synthetase family. Homodimer.

The protein resides in the cytoplasm. It carries out the reaction tRNA(His) + L-histidine + ATP = L-histidyl-tRNA(His) + AMP + diphosphate + H(+). This is Histidine--tRNA ligase from Shewanella oneidensis (strain ATCC 700550 / JCM 31522 / CIP 106686 / LMG 19005 / NCIMB 14063 / MR-1).